The chain runs to 1265 residues: Kinesin-related protein 13 (1265 aa).

Residues 23-350 form the Kinesin motor domain; that stretch reads NIQAFVRVRP…LEYALKAKNI (328 aa). ATP is bound at residue 106–113; that stretch reads GQTGTGKT. Residues 331-459 are a coiled coil; the sequence is LVNLEETINT…KQQQEKQKFI (129 aa). 5 disordered regions span residues 918 to 1026, 1085 to 1119, 1127 to 1146, 1158 to 1214, and 1245 to 1265; these read KSGE…QPLI, SLVN…LSQL, LQPQ…LNGS, LLDD…NQSL, and FGGG…TPLK. Low complexity predominate over residues 930 to 951; that stretch reads IPSPISTSSSSSSSSSISSIHS. 3 stretches are compositionally biased toward polar residues: residues 960-980, 1003-1026, and 1085-1097; these read HQSI…SINC, LNLN…QPLI, and SLVN…SPKL. Composition is skewed to low complexity over residues 1100–1119 and 1128–1146; these read QKIL…LSQL and QPQQ…LNGS. Residues 1158–1169 show a composition bias toward acidic residues; sequence LLDDDSDSDNSD. The span at 1174 to 1195 shows a compositional bias: low complexity; it reads SLLSSNKKSSRASKNAVVSKKV. Positions 1250 to 1265 are enriched in polar residues; the sequence is TISSKLKSLKQQTPLK.

This sequence belongs to the TRAFAC class myosin-kinesin ATPase superfamily. Kinesin family. BimC subfamily.

It localises to the cytoplasm. The protein resides in the cytoskeleton. In terms of biological role, microtubule-associated force-producing protein that plays a role in organelle transport. Its motor activity is directed toward the microtubule's plus end. Cooperates with dynein to control the spindle elongation rate, but is dispensable for mitosis. The sequence is that of Kinesin-related protein 13 (kif13) from Dictyostelium discoideum (Social amoeba).